The sequence spans 153 residues: Interleukin-4 (153 aa).

The N-terminal stretch at 1 to 24 (MGLTSQLLPPLFFLLACAGNFAHG) is a signal peptide. Cystine bridges form between Cys27-Cys151, Cys48-Cys89, and Cys70-Cys123. Asn62 carries an N-linked (GlcNAc...) asparagine glycan.

Belongs to the IL-4/IL-13 family.

The protein resides in the secreted. In terms of biological role, participates in at least several B-cell activation processes as well as of other cell types. It is a costimulator of DNA-synthesis. It induces the expression of class II MHC molecules on resting B-cells. It enhances both secretion and cell surface expression of IgE and IgG1. It also regulates the expression of the low affinity Fc receptor for IgE (CD23) on both lymphocytes and monocytes. Positively regulates IL31RA expression in macrophages. Stimulates autophagy in dendritic cells by interfering with mTORC1 signaling and through the induction of RUFY4. The protein is Interleukin-4 (IL4) of Cercocebus atys (Sooty mangabey).